The sequence spans 251 residues: Ubiquinone/menaquinone biosynthesis C-methyltransferase UbiE (251 aa).

S-adenosyl-L-methionine is bound by residues T74, D95, 123–124 (NA), and S140.

This sequence belongs to the class I-like SAM-binding methyltransferase superfamily. MenG/UbiE family.

The enzyme catalyses a 2-demethylmenaquinol + S-adenosyl-L-methionine = a menaquinol + S-adenosyl-L-homocysteine + H(+). It carries out the reaction a 2-methoxy-6-(all-trans-polyprenyl)benzene-1,4-diol + S-adenosyl-L-methionine = a 5-methoxy-2-methyl-3-(all-trans-polyprenyl)benzene-1,4-diol + S-adenosyl-L-homocysteine + H(+). The protein operates within quinol/quinone metabolism; menaquinone biosynthesis; menaquinol from 1,4-dihydroxy-2-naphthoate: step 2/2. Its pathway is cofactor biosynthesis; ubiquinone biosynthesis. Functionally, methyltransferase required for the conversion of demethylmenaquinol (DMKH2) to menaquinol (MKH2) and the conversion of 2-polyprenyl-6-methoxy-1,4-benzoquinol (DDMQH2) to 2-polyprenyl-3-methyl-6-methoxy-1,4-benzoquinol (DMQH2). The protein is Ubiquinone/menaquinone biosynthesis C-methyltransferase UbiE of Serratia proteamaculans (strain 568).